We begin with the raw amino-acid sequence, 153 residues long: Histone H2B.10 (153 aa).

Basic and acidic residues-rich tracts occupy residues 1–28 (MAPK…EKAP) and 36–53 (EKRL…EGKK). Residues 1–61 (MAPKAEKKPA…KKAGRKKAKK (61 aa)) are disordered. N6-acetyllysine is present on residues K7 and K37. K149 is covalently cross-linked (Glycyl lysine isopeptide (Lys-Gly) (interchain with G-Cter in ubiquitin)).

It belongs to the histone H2B family. The nucleosome is a histone octamer containing two molecules each of H2A, H2B, H3 and H4 assembled in one H3-H4 heterotetramer and two H2A-H2B heterodimers. The octamer wraps approximately 147 bp of DNA. Post-translationally, can be acetylated to form H2BK6ac and H2BK33ac. Monoubiquitinated by BRE1 to form H2BK143ub1 and deubiquitinated by UBP26. Required for heterochromatic histone H3 di- and trimethylation at H3K4me. May give a specific tag for epigenetic transcriptional activation.

The protein localises to the nucleus. Its subcellular location is the chromosome. Its function is as follows. Core component of nucleosome. Nucleosomes wrap and compact DNA into chromatin, limiting DNA accessibility to the cellular machineries which require DNA as a template. Histones thereby play a central role in transcription regulation, DNA repair, DNA replication and chromosomal stability. DNA accessibility is regulated via a complex set of post-translational modifications of histones, also called histone code, and nucleosome remodeling. The sequence is that of Histone H2B.10 (H2B.10) from Oryza sativa subsp. indica (Rice).